A 64-amino-acid chain; its full sequence is Large ribosomal subunit protein bL35 (64 aa).

The span at 1 to 42 shows a compositional bias: basic residues; sequence MPKAKTHSGASKRFRRTGTGKIVRQKANRRHLLEHKPTKRTR. The interval 1–64 is disordered; it reads MPKAKTHSGA…NSRINKLLNG (64 aa). Positions 48–58 are enriched in polar residues; the sequence is TTVSAADNSRI.

The protein belongs to the bacterial ribosomal protein bL35 family.

This chain is Large ribosomal subunit protein bL35, found in Mycolicibacterium smegmatis (strain ATCC 700084 / mc(2)155) (Mycobacterium smegmatis).